A 777-amino-acid polypeptide reads, in one-letter code: MAPTAPAKKRKQSAEVTELSDDEIIDGLLDGALSQSEDDSDFVASGDEDEEDEDEDEDEDKDEDDEHDDKQDIGDLQDLSLNDLDDDAQSKELAKDGANGGSGDGPEADDEDRPNYRVVEDANGGIRYVYDEINPVYDSDDSDKEEDNRIGDIPLSFYEAYPHVGYTIDGKKLMRPSERRQALDSLLDSIEIPKGWTGLTDPTTGKPLNLSQDELELLKRVQMNEIPEEGYDPYPDTVEYFTGIEEKMPLSAAPEPKRRFIPSKHEAKRVMKLVRAIREGRIQPYKSKEEREKEEEGKEEKYYDVWQDEQPRDPHVMHIPAPKLAPPGYDMSYNPPPEYLPTKAEREEWEKMDPEDREKEYLPQKFDALRKVPGYETFVKERFERCLDLYLAPRVRKNRLNIDPASLLPKLPRPEELKPFPTVCQAIFRGHEGRVRSSAIDPTGLWLATGGDDGYVRIWLINPARQVWAVKLSSDEAVNAVRWRPTKDTMILAAAAGEEIFLMVPPDIDPEVEQTSRAVLDAGFGHAAGGADKQTTDGKAPAAKWARPGARLEDEGVLVKVTVRSPVKVISWHRRGDHFCTVSPSGQRSSVAVHTLSKHLSQIPFRKLSGLAQVAHFHPSRPLFFVATQRTIRCYDLQRLELVKVVQPGARWISSFDIHPGGDNLIVGSYDRRLLWHDLDLSTRPYKTMRFHPQAIRAVKYHRGGLPLFADASDDGSLQIFHGKVVSDLMENATIVPLKSLKGHRVVDSLGVMDVDWHPSEPWCISAGADGTCRLWM.

A disordered region spans residues 1-122 (MAPTAPAKKR…RPNYRVVEDA (122 aa)). Residues 36–67 (SEDDSDFVASGDEDEEDEDEDEDEDKDEDDEH) are compositionally biased toward acidic residues. WD repeat units lie at residues 430 to 469 (GHEG…QVWA), 473 to 513 (SSDE…PEVE), 562 to 604 (TVRS…SQIP), 606 to 645 (RKLS…LVKV), 648 to 687 (PGAR…RPYK), 691 to 731 (FHPQ…DLME), and 747 to 777 (VDSL…RLWM).

It belongs to the WD repeat BOP1/ERB1 family. In terms of assembly, component of the NOP7 complex, composed of ERB1, NOP7 and YTM1. The complex is held together by ERB1, which interacts with NOP7 via its N-terminal domain and with YTM1 via a high-affinity interaction between the seven-bladed beta-propeller domains of the 2 proteins. The NOP7 complex associates with the 66S pre-ribosome.

Its subcellular location is the nucleus. The protein resides in the nucleolus. It is found in the nucleoplasm. Component of the NOP7 complex, which is required for maturation of the 25S and 5.8S ribosomal RNAs and formation of the 60S ribosome. This is Ribosome biogenesis protein ERB1 from Pyricularia oryzae (strain 70-15 / ATCC MYA-4617 / FGSC 8958) (Rice blast fungus).